A 778-amino-acid chain; its full sequence is uncharacterized protein (778 aa).

In terms of domain architecture, PE spans 1 to 92 (MSFVIAVPEA…GARSYVVAEA (92 aa)). Disordered regions lie at residues 125–163 (ADGTGAPGGPGGLLLGNGGNGGSGAPGQPGGAGGDAGLI), 372–510 (TGLA…GDAF), and 718–778 (QGGL…GADG). 3 stretches are compositionally biased toward gly residues: residues 402–429 (NQTGGNGGPGPAGGVGEAGGVGGQGGLG), 436–510 (DGTG…GDAF), and 718–763 (QGGL…GSSG).

This sequence belongs to the mycobacterial PE family. PGRS subfamily.

This is an uncharacterized protein from Mycobacterium tuberculosis (strain CDC 1551 / Oshkosh).